The following is a 522-amino-acid chain: Glutathione reductase, mitochondrial (522 aa).

The N-terminal 43 residues, 1–43, are a transit peptide targeting the mitochondrion; it reads MALLPRALSAGAGPSWRRAARAFRGFLLLLPEPAALTRALSRA. Positions 74 and 75 each coordinate FAD. Ser-74 is a glutathione binding site. Arg-81 contacts glutathione. Residue Glu-94 coordinates FAD. The residue at position 97 (Lys-97) is an N6-acetyllysine. FAD-binding residues include Thr-101, Cys-102, and Lys-110. Residues Cys-102 and Cys-107 are joined by a disulfide bond. Tyr-158 contacts glutathione. Ala-174 serves as a coordination point for FAD. 6 residues coordinate NADP(+): Ala-239, Ile-242, Glu-245, Arg-262, Arg-268, and Gly-334. Asp-375 contacts FAD. Residue Leu-381 coordinates NADP(+). FAD is bound at residue Thr-383. Arg-391 is a glutathione binding site. NADP(+) is bound at residue Val-414. His-511 is a binding site for FAD. Catalysis depends on His-511, which acts as the Proton acceptor.

This sequence belongs to the class-I pyridine nucleotide-disulfide oxidoreductase family. As to quaternary structure, homodimer; disulfide-linked. FAD is required as a cofactor.

It is found in the mitochondrion. It localises to the cytoplasm. It carries out the reaction 2 glutathione + NADP(+) = glutathione disulfide + NADPH + H(+). Catalyzes the reduction of glutathione disulfide (GSSG) to reduced glutathione (GSH). Constitutes the major mechanism to maintain a high GSH:GSSG ratio in the cytosol. The polypeptide is Glutathione reductase, mitochondrial (GSR) (Homo sapiens (Human)).